The sequence spans 186 residues: Mitoferrin-2B (186 aa).

The Solcar repeat unit spans residues 75–163; it reads SNVTAHMLAG…FACYEKLKKT (89 aa). The next 3 helical transmembrane spans lie at 77–96, 137–157, and 172–185; these read VTAH…CLMY, RGLN…FACY, and GNCH…NSCP.

It belongs to the mitochondrial carrier (TC 2.A.29) family.

The protein resides in the mitochondrion inner membrane. The catalysed reaction is Fe(2+)(in) = Fe(2+)(out). In terms of biological role, mitochondrial iron transporter that mediates iron uptake. Probably required for heme synthesis of hemoproteins and Fe-S cluster assembly in non-erythroid cells. The protein is Mitoferrin-2B (slc25a28-b) of Xenopus laevis (African clawed frog).